The primary structure comprises 450 residues: Signal recognition particle 54 kDa protein (450 aa).

GTP-binding positions include 107-114 (GIQGSGKT), 188-192 (DTAGR), and 247-250 (TKLD).

It belongs to the GTP-binding SRP family. SRP54 subfamily. As to quaternary structure, part of the signal recognition particle protein translocation system, which is composed of SRP and FtsY. Archaeal SRP consists of a 7S RNA molecule of 300 nucleotides and two protein subunits: SRP54 and SRP19.

It localises to the cytoplasm. It carries out the reaction GTP + H2O = GDP + phosphate + H(+). Involved in targeting and insertion of nascent membrane proteins into the cytoplasmic membrane. Binds to the hydrophobic signal sequence of the ribosome-nascent chain (RNC) as it emerges from the ribosomes. The SRP-RNC complex is then targeted to the cytoplasmic membrane where it interacts with the SRP receptor FtsY. In Methanococcus maripaludis (strain DSM 14266 / JCM 13030 / NBRC 101832 / S2 / LL), this protein is Signal recognition particle 54 kDa protein.